The chain runs to 135 residues: T-cell receptor gamma chain V region 5/10-13 (135 aa).

Residues 1–18 form the signal peptide; that stretch reads MLLLRWPTFCCLWVFGLG. The interval 19-114 is v segment; it reads QLEQTELSVT…DEATYYCAVC (96 aa). The segment at 115 to 135 is j segment; it reads RSGTSWVKIFAKGTKLVVIPP.

This is T-cell receptor gamma chain V region 5/10-13 (Tcrg-V1) from Mus musculus (Mouse).